We begin with the raw amino-acid sequence, 103 residues long: Large ribosomal subunit protein bL21 (103 aa).

The protein belongs to the bacterial ribosomal protein bL21 family. As to quaternary structure, part of the 50S ribosomal subunit. Contacts protein L20.

Functionally, this protein binds to 23S rRNA in the presence of protein L20. This Laribacter hongkongensis (strain HLHK9) protein is Large ribosomal subunit protein bL21.